The chain runs to 167 residues: Epithelial membrane protein 2 (167 aa).

Residues 1–21 (MLVLLAFIIAFHITSAALLFI) traverse the membrane as a helical segment. 3 N-linked (GlcNAc...) asparagine glycosylation sites follow: Asn44, Asn47, and Asn52. 3 consecutive transmembrane segments (helical) span residues 67 to 87 (TMIL…LQLF), 95 to 115 (FVLT…AASI), and 143 to 163 (YILA…YLIL).

The protein belongs to the PMP-22/EMP/MP20 family. In terms of assembly, interacts with PTK2; regulates PTK2 activation and localization. Interacts with ITGB3; regulates the levels of the heterodimer ITGA5-ITGB3 integrin surface expression. Interacts with P2RX7 (via C-terminus). Interacts with ITGB1; the interaction may be direct or indirect and ITGB1 has a heterodimer form.

Its subcellular location is the golgi apparatus membrane. It localises to the cell membrane. It is found in the apical cell membrane. The protein resides in the membrane raft. The protein localises to the cytoplasm. Its subcellular location is the nucleus. It localises to the perinuclear region. In terms of biological role, functions as a key regulator of cell membrane composition by regulating protein surface expression. Also, plays a role in regulation of processes including cell migration, cell proliferation, cell contraction and cell adhesion. Regulates transepithelial migration of neutrophils into the alveolar lumen, potentially via mediation of cell surface expression of adhesion markers and lipid raft formation. Negatively regulates caveolae formation by reducing CAV1 expression and CAV1 amount by increasing lysosomal degradation. Facilitates surface trafficking and the formation of lipid rafts bearing GPI-anchor proteins. Regulates surface expression of MHC1 and ICAM1 proteins increasing susceptibility to T-cell mediated cytotoxicity. Regulates the plasma membrane expression of the integrin heterodimers ITGA6-ITGB1, ITGA5-ITGB3 and ITGA5-ITGB1 resulting in modulation of cell-matrix adhesion. Also regulates many processes through PTK2. Regulates blood vessel endothelial cell migration and angiogenesis by regulating VEGF protein expression through PTK2 activation. Regulates cell migration and cell contraction through PTK2 and SRC activation. Regulates focal adhesion density, F-actin conformation and cell adhesion capacity through interaction with PTK2. Positively regulates cell proliferation. Plays a role during cell death and cell blebbing. Promotes angiogenesis and vasculogenesis through induction of VEGFA via a HIF1A-dependent pathway. Also plays a role in embryo implantation by regulating surface trafficking of integrin heterodimer ITGA5-ITGB3. Plays a role in placental angiogenesis and uterine natural killer cell regulation at the maternal-fetal placental interface, however not required in the maternal tissues for a viable pregnancy. Involved in the early stages of embryogenic development and cardiogenesis, potentially via regulation of epithelial-mesenchymal transition timing. May play a role in glomerular filtration. This is Epithelial membrane protein 2 (EMP2) from Pan troglodytes (Chimpanzee).